We begin with the raw amino-acid sequence, 525 residues long: Lymphocyte activation gene 3 protein (525 aa).

Positions 1–22 (MWEAQFLGLLFLQPLWVAPVKP) are cleaved as a signal peptide. Over 23-450 (LQPGAEVPVV…APGALPAGHL (428 aa)) the chain is Extracellular. The region spanning 37–167 (GAPAQLPCSP…LSCRLRLRLG (131 aa)) is the Ig-like V-type domain. Positions 37–252 (GAPAQLPCSP…LTYRDGFNVS (216 aa)) are interaction with FGL1. A disulfide bridge links Cys44 with Cys160. A disordered region spans residues 62–97 (TWQHQPDSGPPAAAPGHPLAPGPHPAAPSSWGPRPR). Over residues 69–87 (SGPPAAAPGHPLAPGPHPA) the composition is skewed to pro residues. The Ig-like C2-type 1 domain maps to 168 to 252 (QASMTASPPG…LTYRDGFNVS (85 aa)). N-linked (GlcNAc...) asparagine glycosylation occurs at Asn188. The cysteines at positions 189 and 241 are disulfide-linked. Residues Asn250 and Asn256 are each glycosylated (N-linked (GlcNAc...) asparagine). 2 Ig-like C2-type domains span residues 265–343 (PTPL…QQLN) and 348–419 (LAII…QGER). A disulfide bridge links Cys282 with Cys333. Asn343 carries N-linked (GlcNAc...) asparagine glycosylation. Cys369 and Cys412 are oxidised to a cystine. The tract at residues 429–450 (ELSSPGAQRSGRAPGALPAGHL) is connecting peptide. The chain crosses the membrane as a helical span at residues 451-471 (LLFLILGVLSLLLLVTGAFGF). Over 472-525 (HLWRRQWRPRRFSALEQGIHPPQAQSKIEELEQEPEPEPEPEPEPEPEPEPEQL) the chain is Cytoplasmic. Residues 487–525 (EQGIHPPQAQSKIEELEQEPEPEPEPEPEPEPEPEPEQL) form a disordered region. The short motif at 498-503 (KIEELE) is the KIEELE motif element. Residues 501 to 524 (ELEQEPEPEPEPEPEPEPEPEPEQ) form a 12 X 2 AA tandem repeats of E-X region. The span at 502–525 (LEQEPEPEPEPEPEPEPEPEPEQL) shows a compositional bias: acidic residues.

Belongs to the LAG3 family. In terms of assembly, interacts with MHC class II (MHC-II); selectively recognizes stable complexes of peptide and MHC-II. Interacts with FGL1 (via the Fibrinogen C-terminal domain). In terms of processing, proteolytically cleaved by ADAM10 and ADAM17 within the connecting peptide region, leading to release of Secreted lymphocyte activation gene 3 protein (sLAG-3). ADAM10 mediates constitutive cleavage, but cleavage increases following T-cell activation, whereas shedding by ADAM17 is induced by TCR signaling in a PRKCQ-dependent manner. As to expression, primarily expressed in activated T-cells and a subset of natural killer (NK) cells.

The protein localises to the cell membrane. It is found in the secreted. Lymphocyte activation gene 3 protein: Inhibitory receptor on antigen activated T-cells. Delivers inhibitory signals upon binding to ligands, such as FGL1. FGL1 constitutes a major ligand of LAG3 and is responsible for LAG3 T-cell inhibitory function. Following TCR engagement, LAG3 associates with CD3-TCR in the immunological synapse and directly inhibits T-cell activation. May inhibit antigen-specific T-cell activation in synergy with PDCD1/PD-1, possibly by acting as a coreceptor for PDCD1/PD-1. Negatively regulates the proliferation, activation, effector function and homeostasis of both CD8(+) and CD4(+) T-cells. Also mediates immune tolerance: constitutively expressed on a subset of regulatory T-cells (Tregs) and contributes to their suppressive function. Also acts as a negative regulator of plasmacytoid dendritic cell (pDCs) activation. Binds MHC class II (MHC-II); the precise role of MHC-II-binding is however unclear. In terms of biological role, may function as a ligand for MHC class II (MHC-II) on antigen-presenting cells (APC), promoting APC activation/maturation and driving Th1 immune response. In Homo sapiens (Human), this protein is Lymphocyte activation gene 3 protein.